A 217-amino-acid polypeptide reads, in one-letter code: Cytochrome b5 domain-containing protein 1 (217 aa).

In terms of domain architecture, Cytochrome b5 heme-binding spans 6–72 (PRYFTPREVS…NPKTGDVKTH (67 aa)). His-41 and His-72 together coordinate heme.

It belongs to the cytochrome b5 family.

It localises to the cytoplasm. The protein localises to the cytoskeleton. It is found in the cilium axoneme. In terms of biological role, radial spoke stalk protein that binds heme under oxidizing conditions. Required for the coordinated beating of multiple cilia maybe by functioning in a redox signaling pathway. The sequence is that of Cytochrome b5 domain-containing protein 1 (cyb5d1) from Xenopus laevis (African clawed frog).